Here is a 115-residue protein sequence, read N- to C-terminus: Cysteine-rich venom protein 5 (115 aa).

The signal sequence occupies residues 1–22; the sequence is MSKVMIIMLVGMIFAIISTVSG. 3 disulfides stabilise this stretch: Cys26-Cys41, Cys33-Cys44, and Cys40-Cys51. A disordered region spans residues 54 to 115; it reads RIGPPINTQP…RKPTNRPRSH (62 aa). Basic residues-rich tracts occupy residues 68-77 and 86-115; these read QPTRRTRGPK and NRTR…PRSH.

As to expression, expressed by the venom gland.

The protein localises to the secreted. This Pimpla hypochondriaca (Parasitoid wasp) protein is Cysteine-rich venom protein 5.